The chain runs to 333 residues: Glycerol-3-phosphate dehydrogenase [NAD(P)+] (333 aa).

4 residues coordinate NADPH: Ser13, Tyr14, Arg34, and Lys108. Residues Lys108, Gly137, and Thr139 each coordinate sn-glycerol 3-phosphate. Residue Ala141 coordinates NADPH. Lys193, Asp246, Ser256, Arg257, and Asn258 together coordinate sn-glycerol 3-phosphate. Lys193 serves as the catalytic Proton acceptor. NADPH is bound at residue Arg257. Glu283 is an NADPH binding site.

It belongs to the NAD-dependent glycerol-3-phosphate dehydrogenase family.

The protein localises to the cytoplasm. The enzyme catalyses sn-glycerol 3-phosphate + NAD(+) = dihydroxyacetone phosphate + NADH + H(+). It carries out the reaction sn-glycerol 3-phosphate + NADP(+) = dihydroxyacetone phosphate + NADPH + H(+). It functions in the pathway membrane lipid metabolism; glycerophospholipid metabolism. Functionally, catalyzes the reduction of the glycolytic intermediate dihydroxyacetone phosphate (DHAP) to sn-glycerol 3-phosphate (G3P), the key precursor for phospholipid synthesis. This chain is Glycerol-3-phosphate dehydrogenase [NAD(P)+], found in Idiomarina loihiensis (strain ATCC BAA-735 / DSM 15497 / L2-TR).